Reading from the N-terminus, the 267-residue chain is Putative hydro-lyase Arth_3576 (267 aa).

It belongs to the D-glutamate cyclase family.

The protein is Putative hydro-lyase Arth_3576 of Arthrobacter sp. (strain FB24).